We begin with the raw amino-acid sequence, 461 residues long: MQKIILVGKPNVGKSSLFNRLARQRIAITSEISGTTRDTNKAKIEVEGKDCLLIDSGGLDESSELFKNVKFKTLAEAKNSDIIIYMVDGKMAPSDEDRAIFYELCKLNLPIALVINKIDSKKDEQRAWEFINFGVKEIFEISVSHNTGIDELSQWIAGQLEDDVIKTDESEDFDDFLENFNDEGELESSENFEDRYIRVGIVGRVNVGKSSLLNALVKDARAVVSDIAGTTIDPVNEIYEHEGRIFEFVDTAGIRKRGKIEGIERYALNRTEKILENSDIALLVLDSSEPLTELDERIAGVANKFNLGMIIVLNKWDKSEREFDELVKEIKDRFKFLSYAPIISVSALGKKRIHKLYPLILEVYKNFTQKIQTSKLNEVIEEATKAHPIPREKGKSVKIYYAAQFGFAPPKIALIMNRPKCLHFSYKRYLINKLRQNFELSGVPIVLAPKKRGESDENEEQ.

2 EngA-type G domains span residues 2–164 (QKII…EDDV) and 197–368 (IRVG…KNFT). GTP contacts are provided by residues 8 to 15 (GKPNVGKS), 55 to 59 (DSGGL), 116 to 119 (NKID), 203 to 210 (GRVNVGKS), 250 to 254 (DTAGI), and 314 to 317 (NKWD). The region spanning 369–453 (QKIQTSKLNE…PIVLAPKKRG (85 aa)) is the KH-like domain.

The protein belongs to the TRAFAC class TrmE-Era-EngA-EngB-Septin-like GTPase superfamily. EngA (Der) GTPase family. Associates with the 50S ribosomal subunit.

In terms of biological role, GTPase that plays an essential role in the late steps of ribosome biogenesis. This Campylobacter curvus (strain 525.92) protein is GTPase Der.